A 540-amino-acid chain; its full sequence is Ubiquitin carboxyl-terminal hydrolase 17-like protein E (540 aa).

The disordered stretch occupies residues 1–22; that stretch reads MVVSLSFPEETGGENLPSAPLE. The region spanning 85–382 is the USP domain; the sequence is CGLQNTGNSC…NAYVLFYVQQ (298 aa). Cys-94 functions as the Nucleophile in the catalytic mechanism. The active-site Proton acceptor is the His-341. 2 stretches are compositionally biased toward basic and acidic residues: residues 431–441 and 508–520; these read NREKRAKKETS and APDKENQPWHNGD. Disordered regions lie at residues 431 to 461 and 499 to 540; these read NREKRAKKETSLGEGKVPQEVNHEKAGQKHG and RSTA…QGGR. The span at 523–540 shows a compositional bias: polar residues; the sequence is LTSQGLMSPGQLCSQGGR.

Belongs to the peptidase C19 family. USP17 subfamily. Interacts with SUDS3; the interaction is direct.

The protein resides in the nucleus. It is found in the endoplasmic reticulum. It catalyses the reaction Thiol-dependent hydrolysis of ester, thioester, amide, peptide and isopeptide bonds formed by the C-terminal Gly of ubiquitin (a 76-residue protein attached to proteins as an intracellular targeting signal).. In terms of biological role, deubiquitinating enzyme that removes conjugated ubiquitin from specific proteins to regulate different cellular processes that may include cell proliferation, progression through the cell cycle, apoptosis, cell migration, and the cellular response to viral infection. This is Ubiquitin carboxyl-terminal hydrolase 17-like protein E (Usp17le) from Mus musculus (Mouse).